The following is a 290-amino-acid chain: uncharacterized protein (290 aa).

The next 6 membrane-spanning stretches (helical) occupy residues Phe-71–Ile-91, Gly-124–Met-144, Ile-155–Val-175, Phe-202–Val-222, Met-234–Pro-254, and Ile-262–Val-282.

Belongs to the TatC family.

The protein localises to the plastid. It localises to the chloroplast membrane. This is an uncharacterized protein from Guillardia theta (Cryptophyte).